A 355-amino-acid polypeptide reads, in one-letter code: Peptide chain release factor 1 (355 aa).

Q231 bears the N5-methylglutamine mark. Over residues 280–291 (SERLAKESEARK) the composition is skewed to basic and acidic residues. The interval 280 to 303 (SERLAKESEARKSQVGSGDRSERI) is disordered.

Belongs to the prokaryotic/mitochondrial release factor family. Post-translationally, methylated by PrmC. Methylation increases the termination efficiency of RF1.

The protein resides in the cytoplasm. In terms of biological role, peptide chain release factor 1 directs the termination of translation in response to the peptide chain termination codons UAG and UAA. In Campylobacter jejuni (strain RM1221), this protein is Peptide chain release factor 1.